The following is a 496-amino-acid chain: Fatty acyl-CoA reductase 8 (496 aa).

This sequence belongs to the fatty acyl-CoA reductase family.

It catalyses the reaction a long-chain fatty acyl-CoA + 2 NADPH + 2 H(+) = a long-chain primary fatty alcohol + 2 NADP(+) + CoA. Functionally, catalyzes the reduction of fatty acyl-CoA to fatty alcohols. Catalyzes specifically the formation of C16:0 fatty alcohol. The sequence is that of Fatty acyl-CoA reductase 8 (FAR8) from Arabidopsis thaliana (Mouse-ear cress).